Reading from the N-terminus, the 221-residue chain is GTP cyclohydrolase 1 (221 aa).

The Zn(2+) site is built by cysteine 109, histidine 112, and cysteine 180.

It belongs to the GTP cyclohydrolase I family. As to quaternary structure, toroid-shaped homodecamer, composed of two pentamers of five dimers.

It carries out the reaction GTP + H2O = 7,8-dihydroneopterin 3'-triphosphate + formate + H(+). It functions in the pathway cofactor biosynthesis; 7,8-dihydroneopterin triphosphate biosynthesis; 7,8-dihydroneopterin triphosphate from GTP: step 1/1. This Sodalis glossinidius (strain morsitans) protein is GTP cyclohydrolase 1.